The primary structure comprises 222 residues: MKFGKEIAKKNQIIYRYIILKIQSFEWPANTRIFSERQLEIRFNSSRSQIRSVLATLLNKNIIRYTKNTPGYFVCKDVGFSFFHKTQDNLKVKYAKLSTLIKKLLSQDDASVFANIDSTVHLDKFKGIEAKFFDENKKHFLNVCFFAKDDILNILDENNLQQQFFREFAYNGIAIEKRHCVTSVDKESGCLVMYDMYYDDNDNFVVASKSNFLNPELKVINA.

The 70-residue stretch at 8-77 (AKKNQIIYRY…NTPGYFVCKD (70 aa)) folds into the HTH gntR-type domain.

This is an uncharacterized protein from Mycoplasma genitalium (strain ATCC 33530 / DSM 19775 / NCTC 10195 / G37) (Mycoplasmoides genitalium).